A 130-amino-acid chain; its full sequence is Small ribosomal subunit protein uS11 (130 aa).

It belongs to the universal ribosomal protein uS11 family. In terms of assembly, part of the 30S ribosomal subunit. Interacts with proteins S7 and S18. Binds to IF-3.

Its function is as follows. Located on the platform of the 30S subunit, it bridges several disparate RNA helices of the 16S rRNA. Forms part of the Shine-Dalgarno cleft in the 70S ribosome. This is Small ribosomal subunit protein uS11 from Lactobacillus helveticus (strain DPC 4571).